A 408-amino-acid polypeptide reads, in one-letter code: MVQVNGNYLKLKAGYLFPEIGRRVKAFSAANPDAALIRLGIGDVTEPLPLACREAMKTAIDAMGTAEGFHGYGPEQGYGWLREAIAKHDFQARGCDISAEEIFVSDGSKCDSSNILDILGEGNRIAVTDPVYPVYVDTNVMAGRTGEAGEEGRYGGLTYLPISADNGFAAQIPSEPVDLIYLCFPNNPTGAVATKGQLKAWVDYARSNGSLILFDAAYEAFIQDPSLPHSIFEIEGARECAIEFRSFSKNAGFTGTRCAFTVVPKGLKGTASNGEAVELWGLWNRRQSTKFNGVSYIIQRGAEAVYSDAGQAEVKGLVNFYMENAAIIRRELSGAGLTIYGGEHAPYVWIKTPEGMDSWGFFDHLLNKANVVGTPGSGFGASGEGYFRLSAFNSRANVDAAMARIKAL.

The substrate site is built by Tyr15 and Gly42. Pyridoxal 5'-phosphate contacts are provided by residues Tyr72, 108 to 109, Tyr132, Asn187, Tyr218, and 246 to 248; these read SK and SFS. Positions 109, 132, and 187 each coordinate substrate. Lys249 carries the post-translational modification N6-(pyridoxal phosphate)lysine. 2 residues coordinate pyridoxal 5'-phosphate: Arg257 and Asn292. Residues Asn292 and Arg388 each coordinate substrate.

The protein belongs to the class-I pyridoxal-phosphate-dependent aminotransferase family. LL-diaminopimelate aminotransferase subfamily. In terms of assembly, homodimer. It depends on pyridoxal 5'-phosphate as a cofactor.

The catalysed reaction is (2S,6S)-2,6-diaminopimelate + 2-oxoglutarate = (S)-2,3,4,5-tetrahydrodipicolinate + L-glutamate + H2O + H(+). It functions in the pathway amino-acid biosynthesis; L-lysine biosynthesis via DAP pathway; LL-2,6-diaminopimelate from (S)-tetrahydrodipicolinate (aminotransferase route): step 1/1. In terms of biological role, involved in the synthesis of meso-diaminopimelate (m-DAP or DL-DAP), required for both lysine and peptidoglycan biosynthesis. Catalyzes the direct conversion of tetrahydrodipicolinate to LL-diaminopimelate. This is LL-diaminopimelate aminotransferase from Parasynechococcus marenigrum (strain WH8102).